Reading from the N-terminus, the 146-residue chain is Stress enhanced protein 1, chloroplastic (146 aa).

A chloroplast-targeting transit peptide spans 1 to 73; it reads MALSQVSASL…GNRAASVSIR (73 aa). 2 helical membrane-spanning segments follow: residues 84-104 and 120-140; these read LDIW…TVEI and LPTV…VFIF.

It belongs to the ELIP/psbS family.

The protein resides in the plastid. Its subcellular location is the chloroplast thylakoid membrane. Its function is as follows. May be involved in non-photochemical quenching, a process that maintains the balance between dissipation and utilization of light energy to minimize generation of oxidizing molecules, thereby protecting the plant against photo-oxidative damage. May play a photoprotective role in the thylakoid membrane in response to light stress. This Arabidopsis thaliana (Mouse-ear cress) protein is Stress enhanced protein 1, chloroplastic.